The sequence spans 70 residues: Large ribosomal subunit protein bL31 (70 aa).

Zn(2+) contacts are provided by cysteine 16, cysteine 18, cysteine 37, and cysteine 40.

Belongs to the bacterial ribosomal protein bL31 family. Type A subfamily. In terms of assembly, part of the 50S ribosomal subunit. Zn(2+) serves as cofactor.

Its function is as follows. Binds the 23S rRNA. The chain is Large ribosomal subunit protein bL31 from Shewanella amazonensis (strain ATCC BAA-1098 / SB2B).